The following is a 270-amino-acid chain: Putative pyruvate, phosphate dikinase regulatory protein (270 aa).

Residue G151–T158 participates in ADP binding.

The protein belongs to the pyruvate, phosphate/water dikinase regulatory protein family. PDRP subfamily.

The catalysed reaction is N(tele)-phospho-L-histidyl/L-threonyl-[pyruvate, phosphate dikinase] + ADP = N(tele)-phospho-L-histidyl/O-phospho-L-threonyl-[pyruvate, phosphate dikinase] + AMP + H(+). The enzyme catalyses N(tele)-phospho-L-histidyl/O-phospho-L-threonyl-[pyruvate, phosphate dikinase] + phosphate + H(+) = N(tele)-phospho-L-histidyl/L-threonyl-[pyruvate, phosphate dikinase] + diphosphate. In terms of biological role, bifunctional serine/threonine kinase and phosphorylase involved in the regulation of the pyruvate, phosphate dikinase (PPDK) by catalyzing its phosphorylation/dephosphorylation. In Streptococcus gordonii (strain Challis / ATCC 35105 / BCRC 15272 / CH1 / DL1 / V288), this protein is Putative pyruvate, phosphate dikinase regulatory protein.